The chain runs to 489 residues: Glycogen synthase (489 aa).

ADP-alpha-D-glucose is bound at residue Lys18.

It belongs to the glycosyltransferase 1 family. Bacterial/plant glycogen synthase subfamily.

It catalyses the reaction [(1-&gt;4)-alpha-D-glucosyl](n) + ADP-alpha-D-glucose = [(1-&gt;4)-alpha-D-glucosyl](n+1) + ADP + H(+). It functions in the pathway glycan biosynthesis; glycogen biosynthesis. Its function is as follows. Synthesizes alpha-1,4-glucan chains using ADP-glucose. The polypeptide is Glycogen synthase (Rhodopseudomonas palustris (strain BisB18)).